Reading from the N-terminus, the 250-residue chain is Isoprenyl transferase (250 aa).

Residue Asp27 is part of the active site. Asp27 is a Mg(2+) binding site. Residues 28-31 (GNRR), Trp32, His48, and 76-78 (STE) contribute to the substrate site. The Proton acceptor role is filled by Asn79. Substrate-binding positions include Phe80, Arg82, Arg199, and 205-207 (RVS). Glu218 serves as a coordination point for Mg(2+).

It belongs to the UPP synthase family. As to quaternary structure, homodimer. Mg(2+) is required as a cofactor.

Functionally, catalyzes the condensation of isopentenyl diphosphate (IPP) with allylic pyrophosphates generating different type of terpenoids. This chain is Isoprenyl transferase, found in Chlamydia caviae (strain ATCC VR-813 / DSM 19441 / 03DC25 / GPIC) (Chlamydophila caviae).